A 378-amino-acid polypeptide reads, in one-letter code: Chaperone protein DnaJ (378 aa).

The region spanning 5 to 70 is the J domain; it reads DYYEVLGLQK…EKRAMYDQYG (66 aa). A CR-type zinc finger spans residues 135–213; sequence GVKKDIRIRT…CHGDGRVEKT (79 aa). Zn(2+)-binding residues include cysteine 148, cysteine 151, cysteine 165, cysteine 168, cysteine 187, cysteine 190, cysteine 201, and cysteine 204. CXXCXGXG motif repeat units lie at residues 148–155, 165–172, 187–194, and 201–208; these read CDTCHGSG, CPHCHGSG, CPSCHGTG, and CKSCHGDG.

Belongs to the DnaJ family. In terms of assembly, homodimer. It depends on Zn(2+) as a cofactor.

Its subcellular location is the cytoplasm. Functionally, participates actively in the response to hyperosmotic and heat shock by preventing the aggregation of stress-denatured proteins and by disaggregating proteins, also in an autonomous, DnaK-independent fashion. Unfolded proteins bind initially to DnaJ; upon interaction with the DnaJ-bound protein, DnaK hydrolyzes its bound ATP, resulting in the formation of a stable complex. GrpE releases ADP from DnaK; ATP binding to DnaK triggers the release of the substrate protein, thus completing the reaction cycle. Several rounds of ATP-dependent interactions between DnaJ, DnaK and GrpE are required for fully efficient folding. Also involved, together with DnaK and GrpE, in the DNA replication of plasmids through activation of initiation proteins. This chain is Chaperone protein DnaJ, found in Glaesserella parasuis serovar 5 (strain SH0165) (Haemophilus parasuis).